Here is a 370-residue protein sequence, read N- to C-terminus: Aldo-keto reductase NECHADRAFT_45914 (370 aa).

Residue Asp78 coordinates NADP(+). Residue Tyr83 is the Proton donor of the active site. Position 174 (His174) interacts with substrate. NADP(+)-binding positions include 204 to 205, Gln230, 259 to 269, and 333 to 341; these read SS, APLASGRLARR, and STVQRIEEA.

Belongs to the aldo/keto reductase family.

Its pathway is secondary metabolite biosynthesis. Aldo-keto reductase; part of the gene cluster that mediates the biosynthesis of sansalvamide, a cyclic pentadepsipeptide that shows promising results as potential anti-cancer drug. The nonribosmal peptide synthetase NRPS30 produces sansalvamide by incorporating successively one phenylalanine, one leucine, one alpha-hydroxyisocaproic acid (HICA), one valine and one leucine before sansalvamide is released from by cyclization by the terminal C domain of NRPS30. The HICA residue is probably provided by reduction of alpha-ketoisocaproate by the cluster-specific aldo-keto reductase (NECHADRAFT_45914). In Fusarium vanettenii (strain ATCC MYA-4622 / CBS 123669 / FGSC 9596 / NRRL 45880 / 77-13-4) (Fusarium solani subsp. pisi), this protein is Aldo-keto reductase NECHADRAFT_45914.